The chain runs to 143 residues: Small ribosomal subunit protein uS11c (143 aa).

The protein belongs to the universal ribosomal protein uS11 family. Part of the 30S ribosomal subunit.

The protein localises to the plastid. Its subcellular location is the chloroplast. This chain is Small ribosomal subunit protein uS11c, found in Oryza nivara (Indian wild rice).